We begin with the raw amino-acid sequence, 266 residues long: Dihydropteroate synthase (266 aa).

One can recognise a Pterin-binding domain in the interval 12 to 260 (AAIMGILNVT…DVKANQDIVA (249 aa)). Asparagine 19 is a binding site for Mg(2+). Residues threonine 59, aspartate 93, asparagine 112, aspartate 176, lysine 212, and 248 to 250 (RVH) each bind (7,8-dihydropterin-6-yl)methyl diphosphate.

The protein belongs to the DHPS family. Homodimer or homotrimer. The cofactor is Mg(2+).

It carries out the reaction (7,8-dihydropterin-6-yl)methyl diphosphate + 4-aminobenzoate = 7,8-dihydropteroate + diphosphate. The protein operates within cofactor biosynthesis; tetrahydrofolate biosynthesis; 7,8-dihydrofolate from 2-amino-4-hydroxy-6-hydroxymethyl-7,8-dihydropteridine diphosphate and 4-aminobenzoate: step 1/2. Catalyzes the condensation of para-aminobenzoate (pABA) with 6-hydroxymethyl-7,8-dihydropterin diphosphate (DHPt-PP) to form 7,8-dihydropteroate (H2Pte), the immediate precursor of folate derivatives. This chain is Dihydropteroate synthase (folP), found in Streptococcus pyogenes serotype M6 (strain ATCC BAA-946 / MGAS10394).